The chain runs to 1109 residues: Cation channel sperm-associated auxiliary subunit beta (1109 aa).

Topologically, residues 1 to 1055 are extracellular; that stretch reads MESPLIYVML…QIYVDEVPLP (1055 aa). C35 and C60 are oxidised to a cystine. N-linked (GlcNAc...) asparagine glycosylation is found at N66, N90, and N118. C189 and C302 are joined by a disulfide. A glycan (N-linked (GlcNAc...) asparagine) is linked at N321. An intrachain disulfide couples C330 to C343. An N-linked (GlcNAc...) asparagine glycan is attached at N672. 4 disulfides stabilise this stretch: C720-C818, C831-C1039, C913-C922, and C924-C939. 2 N-linked (GlcNAc...) asparagine glycosylation sites follow: N915 and N923. N-linked (GlcNAc...) asparagine glycosylation is present at N1017. Residues 1056-1078 form a helical membrane-spanning segment; the sequence is FPGHALIAVATSVVLGVLIFIAF. At 1079–1109 the chain is on the cytoplasmic side; it reads VFQLRNIHPLKALKKSIRGNPGLTSSTTVSS.

Component of the CatSper complex or CatSpermasome composed of the core pore-forming members CATSPER1, CATSPER2, CATSPER3 and CATSPER4 as well as auxiliary members CATSPERB, CATSPERG2, CATSPERD, CATSPERE, CATSPERZ, C2CD6/CATSPERT, SLCO6C1, TMEM249, TMEM262 and EFCAB9. HSPA1 may be an additional auxiliary complex member. The core complex members CATSPER1, CATSPER2, CATSPER3 and CATSPER4 form a heterotetrameric channel. The auxiliary CATSPERB, CATSPERG2, CATSPERD and CATSPERE subunits form a pavilion-like structure over the pore which stabilizes the complex through interactions with CATSPER4, CATSPER3, CATSPER1 and CATSPER2 respectively. SLCO6C1 interacts with CATSPERE and TMEM262/CATSPERH interacts with CATSPERB, further stabilizing the complex. C2CD6/CATSPERT interacts at least with CATSPERD and is required for targeting the CatSper complex in the flagellar membrane. As to expression, testis-specific. Specifically present in the principal piece of sperm tail (at protein level). Specifically expressed in the seminiferous tubules but not in the interstitial cells. Within the tubules, it is expressed in spermatocytes and spermatids, but not in spermatogonia.

The protein localises to the cell projection. The protein resides in the cilium. Its subcellular location is the flagellum membrane. Auxiliary component of the CatSper complex, a complex involved in sperm cell hyperactivation. Sperm cell hyperactivation is needed for sperm motility which is essential late in the preparation of sperm for fertilization. The chain is Cation channel sperm-associated auxiliary subunit beta from Mus musculus (Mouse).